Reading from the N-terminus, the 259-residue chain is Type III pantothenate kinase (259 aa).

An ATP-binding site is contributed by 6 to 13 (DIGNTNVV). 107–110 (GADR) serves as a coordination point for substrate. The Proton acceptor role is filled by D109. Residue D129 coordinates K(+). T132 contributes to the ATP binding site. T184 contributes to the substrate binding site.

The protein belongs to the type III pantothenate kinase family. As to quaternary structure, homodimer. It depends on NH4(+) as a cofactor. Requires K(+) as cofactor.

It is found in the cytoplasm. It carries out the reaction (R)-pantothenate + ATP = (R)-4'-phosphopantothenate + ADP + H(+). The protein operates within cofactor biosynthesis; coenzyme A biosynthesis; CoA from (R)-pantothenate: step 1/5. In terms of biological role, catalyzes the phosphorylation of pantothenate (Pan), the first step in CoA biosynthesis. The chain is Type III pantothenate kinase from Thermomicrobium roseum (strain ATCC 27502 / DSM 5159 / P-2).